Here is a 338-residue protein sequence, read N- to C-terminus: Holliday junction branch migration complex subunit RuvB (338 aa).

Residues 1-181 (MDRIVEIEKV…FGMDFRLQFY (181 aa)) form a large ATPase domain (RuvB-L) region. ATP contacts are provided by residues leucine 20, arginine 21, glycine 62, lysine 65, threonine 66, threonine 67, 128-130 (EDF), arginine 171, tyrosine 181, and arginine 218. Residue threonine 66 coordinates Mg(2+). The small ATPAse domain (RuvB-S) stretch occupies residues 182–252 (STAELSRIIQ…RAKEGLNALG (71 aa)). The interval 255 to 338 (SLGFDEMDIK…NRTKGLFDGE (84 aa)) is head domain (RuvB-H). Residues arginine 309 and arginine 314 each coordinate DNA.

It belongs to the RuvB family. Homohexamer. Forms an RuvA(8)-RuvB(12)-Holliday junction (HJ) complex. HJ DNA is sandwiched between 2 RuvA tetramers; dsDNA enters through RuvA and exits via RuvB. An RuvB hexamer assembles on each DNA strand where it exits the tetramer. Each RuvB hexamer is contacted by two RuvA subunits (via domain III) on 2 adjacent RuvB subunits; this complex drives branch migration. In the full resolvosome a probable DNA-RuvA(4)-RuvB(12)-RuvC(2) complex forms which resolves the HJ.

It localises to the cytoplasm. The catalysed reaction is ATP + H2O = ADP + phosphate + H(+). The RuvA-RuvB-RuvC complex processes Holliday junction (HJ) DNA during genetic recombination and DNA repair, while the RuvA-RuvB complex plays an important role in the rescue of blocked DNA replication forks via replication fork reversal (RFR). RuvA specifically binds to HJ cruciform DNA, conferring on it an open structure. The RuvB hexamer acts as an ATP-dependent pump, pulling dsDNA into and through the RuvAB complex. RuvB forms 2 homohexamers on either side of HJ DNA bound by 1 or 2 RuvA tetramers; 4 subunits per hexamer contact DNA at a time. Coordinated motions by a converter formed by DNA-disengaged RuvB subunits stimulates ATP hydrolysis and nucleotide exchange. Immobilization of the converter enables RuvB to convert the ATP-contained energy into a lever motion, pulling 2 nucleotides of DNA out of the RuvA tetramer per ATP hydrolyzed, thus driving DNA branch migration. The RuvB motors rotate together with the DNA substrate, which together with the progressing nucleotide cycle form the mechanistic basis for DNA recombination by continuous HJ branch migration. Branch migration allows RuvC to scan DNA until it finds its consensus sequence, where it cleaves and resolves cruciform DNA. This Campylobacter curvus (strain 525.92) protein is Holliday junction branch migration complex subunit RuvB.